Consider the following 180-residue polypeptide: Ribosome-recycling factor (180 aa).

This sequence belongs to the RRF family.

Its subcellular location is the cytoplasm. Its function is as follows. Responsible for the release of ribosomes from messenger RNA at the termination of protein biosynthesis. May increase the efficiency of translation by recycling ribosomes from one round of translation to another. The sequence is that of Ribosome-recycling factor from Chlamydia caviae (strain ATCC VR-813 / DSM 19441 / 03DC25 / GPIC) (Chlamydophila caviae).